Reading from the N-terminus, the 85-residue chain is Toxin To6 (85 aa).

Positions 1 to 20 (MSIFPIILALLLIGLDEGEA) are cleaved as a signal peptide. One can recognise an LCN-type CS-alpha/beta domain in the interval 21 to 83 (LDGYPLSKNN…EMYPGRLPCN (63 aa)). 4 cysteine pairs are disulfide-bonded: Cys-32-Cys-82, Cys-36-Cys-59, Cys-42-Cys-64, and Cys-46-Cys-66.

Expressed by the venom gland.

The protein localises to the secreted. Functionally, beta toxins bind voltage-independently at site-4 of sodium channels (Nav) and shift the voltage of activation toward more negative potentials thereby affecting sodium channel activation and promoting spontaneous and repetitive firing. The protein is Toxin To6 of Tityus obscurus (Amazonian scorpion).